The following is a 66-amino-acid chain: Large ribosomal subunit protein uL29 (66 aa).

Belongs to the universal ribosomal protein uL29 family.

The sequence is that of Large ribosomal subunit protein uL29 from Roseiflexus castenholzii (strain DSM 13941 / HLO8).